Consider the following 134-residue polypeptide: Small ribosomal subunit protein uS11 (134 aa).

The interval 115–134 is disordered; sequence VTPIPTDSTRRKGGRRGRRL. Residues 125 to 134 are compositionally biased toward basic residues; that stretch reads RKGGRRGRRL.

The protein belongs to the universal ribosomal protein uS11 family.

The polypeptide is Small ribosomal subunit protein uS11 (RPS14) (Syntrichia ruralis (Great hairy screw-moss)).